A 407-amino-acid polypeptide reads, in one-letter code: Protein trichome birefringence-like 12 (407 aa).

A helical; Signal-anchor for type II membrane protein membrane pass occupies residues 21-41 (SLLPRILLLSLLLLLFYSLIL). A GDS motif motif is present at residues 130-132 (GDS). Positions 379-393 (DCMHWCLPGVPDTWV) match the DCXHWCLPGXXDXWN motif motif.

The protein belongs to the PC-esterase family. TBL subfamily.

It localises to the membrane. In terms of biological role, may act as a bridging protein that binds pectin and other cell wall polysaccharides. Probably involved in maintaining esterification of pectins. May be involved in the specific O-acetylation of cell wall polymers. The protein is Protein trichome birefringence-like 12 (TBL12) of Arabidopsis thaliana (Mouse-ear cress).